We begin with the raw amino-acid sequence, 404 residues long: Proteasomal ubiquitin receptor ADRM1-B (404 aa).

Residues 17–130 (SSSKYLVEFR…RKVNEYLNNP (114 aa)) form the Pru domain. Disordered regions lie at residues 128–149 (NNPP…LSAL), 195–258 (GSGG…TSPT), and 376–404 (FAKA…MSLD). Low complexity predominate over residues 195–247 (GSGGPTTSSSSSSSRSQSAAVTPSSTTSSTRTTSAPVAPAAAPATTPSPAVSS). Positions 248-258 (NDGASAATSPT) are enriched in polar residues. Residues 278-390 (TGEGGQQVDL…QSTSSQKERE (113 aa)) enclose the DEUBAD domain. Residues 386–395 (QKERESSEKK) are compositionally biased toward basic and acidic residues.

Belongs to the ADRM1 family. As to quaternary structure, component of the 19S proteasome regulatory particle complex. The 26S proteasome consists of a 20S core particle (CP) and two 19S regulatory subunits (RP).

It localises to the cytoplasm. It is found in the nucleus. Functionally, component of the 26S proteasome, a multiprotein complex involved in the ATP-dependent degradation of ubiquitinated proteins. This complex plays a key role in the maintenance of protein homeostasis by removing misfolded or damaged proteins, which could impair cellular functions, and by removing proteins whose functions are no longer required. Therefore, the proteasome participates in numerous cellular processes, including cell cycle progression, apoptosis, or DNA damage repair. Within the complex, functions as a proteasomal ubiquitin receptor. The polypeptide is Proteasomal ubiquitin receptor ADRM1-B (adrm1-b) (Xenopus laevis (African clawed frog)).